The primary structure comprises 355 residues: Blue-sensitive opsin P467 (355 aa).

The Extracellular segment spans residues 1–36 (MNGTEGINFYVPLSNKTGLVRSPFEYPQYYLADPWK). N-linked (GlcNAc...) asparagine glycosylation is found at asparagine 2 and asparagine 15. The helical transmembrane segment at 37 to 61 (FKVLSFYMFFLIAAGMPLNGLTLFV) threads the bilayer. The Cytoplasmic segment spans residues 62-73 (TFQHKKLRQPLN). A helical membrane pass occupies residues 74-98 (YILVNLAAANLVTVCCGFTVTFYAS). The Extracellular segment spans residues 99–113 (WYAYFVFGPIGCAIE). A disulfide bridge links cysteine 110 with cysteine 187. A helical membrane pass occupies residues 114–133 (GFFATIGGQVALWSLVVLAI). Residues 134-152 (ERYIVICKPMGNFRFSATH) are Cytoplasmic-facing. Residues 153–176 (AIMGIAFTWFMALACAGPPLFGWS) form a helical membrane-spanning segment. The Extracellular segment spans residues 177 to 202 (RFIPEGMQCSCGPDYYTLNPDFHNES). Asparagine 200 carries an N-linked (GlcNAc...) asparagine glycan. The chain crosses the membrane as a helical span at residues 203 to 230 (YVIYMFIVHFTVPMVVIFFSYGRLVCKV). The Cytoplasmic portion of the chain corresponds to 231-252 (REAAAQQQESATTQKAEKEVTR). Residues 253–276 (MVILMVLGFLLAWTPYAATAIWIF) traverse the membrane as a helical segment. At 277–284 (TNRGAAFS) the chain is on the extracellular side. Residues 285 to 309 (VTFMTIPAFFSKSSSIYNPIIYVLL) form a helical membrane-spanning segment. Lysine 296 carries the post-translational modification N6-(retinylidene)lysine. At 310–355 (NKQFRNCMVTTICCGKNPFGDEDVSSSVSQSKTEVSSVSSSQVAPA) the chain is on the cytoplasmic side. The segment at 333–355 (VSSSVSQSKTEVSSVSSSQVAPA) is disordered. Residues 334-355 (SSSVSQSKTEVSSVSSSQVAPA) are compositionally biased toward low complexity.

It belongs to the G-protein coupled receptor 1 family. Opsin subfamily. Post-translationally, phosphorylated on some or all of the serine and threonine residues present in the C-terminal region. In terms of tissue distribution, in this lizard the color pigments are found in the rod-shaped photoreceptor cells which have been derived from ancestral cone-like photoreceptors.

The protein localises to the membrane. Its function is as follows. Visual pigments are the light-absorbing molecules that mediate vision. They consist of an apoprotein, opsin, covalently linked to cis-retinal. In Gekko gecko (Tokay gecko), this protein is Blue-sensitive opsin P467.